Reading from the N-terminus, the 229-residue chain is Acidic leucine-rich nuclear phosphoprotein 32-related protein 1 (229 aa).

4 LRR repeats span residues 19–40 (TVDT…TDQL), 42–63 (NLEM…PTLP), 64–85 (ALTY…DVLV), and 90–110 (DLKK…RCLK). One can recognise an LRRCT domain in the interval 124-164 (PSLGLLEDYREKMFEMIPSLKILDGCDVDGEEVEEEFAGEG). Residues 155-177 (EVEEEFAGEGGEDSEEGSGDEDG) show a composition bias toward acidic residues. A disordered region spans residues 155-229 (EVEEEFAGEG…DNKKAAGDDE (75 aa)). Residues 219–229 (PDNKKAAGDDE) are compositionally biased toward basic and acidic residues.

The protein belongs to the ANP32 family.

This is Acidic leucine-rich nuclear phosphoprotein 32-related protein 1 from Caenorhabditis elegans.